The chain runs to 126 residues: Urease subunit beta (126 aa).

It belongs to the urease beta subunit family. Heterotrimer of UreA (gamma), UreB (beta) and UreC (alpha) subunits. Three heterotrimers associate to form the active enzyme.

The protein localises to the cytoplasm. The catalysed reaction is urea + 2 H2O + H(+) = hydrogencarbonate + 2 NH4(+). Its pathway is nitrogen metabolism; urea degradation; CO(2) and NH(3) from urea (urease route): step 1/1. This Gloeothece citriformis (strain PCC 7424) (Cyanothece sp. (strain PCC 7424)) protein is Urease subunit beta.